The primary structure comprises 778 residues: Subtilisin-like protease SBT5.4 (778 aa).

The N-terminal stretch at 1–35 is a signal peptide; that stretch reads MSMTRRYSSTQYSNKMSLQSLSSLLLLVTLFFSPA. The Inhibitor I9 domain occupies 41-126; that stretch reads SYIVYLGSHA…VFPNKGRKLH (86 aa). The Peptidase S8 domain occupies 130-634; sequence SWNFMLLAKN…SGHVQPNKAA (505 aa). The Charge relay system role is filled by aspartate 163. Asparagine 218 is a glycosylation site (N-linked (GlcNAc...) asparagine). Histidine 230 functions as the Charge relay system in the catalytic mechanism. 2 N-linked (GlcNAc...) asparagine glycosylation sites follow: asparagine 253 and asparagine 404. A PA domain is found at 401-486; that stretch reads ANGNVTDALL…KDGETLFSYL (86 aa). Serine 567 acts as the Charge relay system in catalysis. 3 N-linked (GlcNAc...) asparagine glycosylation sites follow: asparagine 657, asparagine 690, and asparagine 732.

It belongs to the peptidase S8 family. As to expression, expressed in the vasculature of roots and leaves, stomata, sepals, stigma, anthers and siliques.

The protein resides in the endoplasmic reticulum. The protein localises to the cell membrane. Functionally, serine protease. Has a substrate preference for the hydrophobic residues Phe and Ala and the basic residue Asp in the P1 position, and for Asp, Leu or Ala in the P1' position. Interferes with CLAVATA 3 (CLV3) signaling, but does not cleave CLV3. This Arabidopsis thaliana (Mouse-ear cress) protein is Subtilisin-like protease SBT5.4.